We begin with the raw amino-acid sequence, 347 residues long: MNPIVFSTILTTAIMGTVIVMMSSHWLMVWIGFEMNLLAIIPILMKKFNPRAMEASTKYFLTQATASMLLMSAIIINLMHSGQWTITKMFNPTASAIMTSALIMKLGLSPFHFWVPEVTQGISLMSGLILLTWQKLAPMSILYQIAPSINLDMLMTSALLSILVGGWGGLNQTQLRKIMAYSSIAHMGWMTAILTYNPTMTMLNMLIYIMMTLTTFMLLMLNSSTTTLSLSHTWNKTPLITSLILIIMLSLGGLPPLSGFIPKWMIIQELTKNNSIILPTSMAIMALLNLYFYLRLTYSTSLTMFPSTNNMKMKWQFENSKQMSLLPTLIIMSTLLLPLMPTMSILN.

The next 10 helical transmembrane spans lie at 3-23 (PIVF…VMMS), 25-45 (HWLM…PILM), 59-79 (YFLT…INLM), 111-131 (FHFW…LILL), 149-169 (INLD…GWGG), 178-198 (IMAY…TYNP), 201-221 (TMLN…LLML), 242-262 (SLIL…GFIP), 274-294 (NSII…YFYL), and 325-345 (LLPT…TMSI).

Belongs to the complex I subunit 2 family. As to quaternary structure, core subunit of respiratory chain NADH dehydrogenase (Complex I) which is composed of 45 different subunits. Interacts with TMEM242.

The protein resides in the mitochondrion inner membrane. It carries out the reaction a ubiquinone + NADH + 5 H(+)(in) = a ubiquinol + NAD(+) + 4 H(+)(out). Core subunit of the mitochondrial membrane respiratory chain NADH dehydrogenase (Complex I) which catalyzes electron transfer from NADH through the respiratory chain, using ubiquinone as an electron acceptor. Essential for the catalytic activity and assembly of complex I. This Rhinoceros unicornis (Greater Indian rhinoceros) protein is NADH-ubiquinone oxidoreductase chain 2.